Reading from the N-terminus, the 245-residue chain is 1-(5-phosphoribosyl)-5-[(5-phosphoribosylamino)methylideneamino] imidazole-4-carboxamide isomerase (245 aa).

The Proton acceptor role is filled by Asp8. Residue Asp130 is the Proton donor of the active site.

It belongs to the HisA/HisF family.

It localises to the cytoplasm. The enzyme catalyses 1-(5-phospho-beta-D-ribosyl)-5-[(5-phospho-beta-D-ribosylamino)methylideneamino]imidazole-4-carboxamide = 5-[(5-phospho-1-deoxy-D-ribulos-1-ylimino)methylamino]-1-(5-phospho-beta-D-ribosyl)imidazole-4-carboxamide. Its pathway is amino-acid biosynthesis; L-histidine biosynthesis; L-histidine from 5-phospho-alpha-D-ribose 1-diphosphate: step 4/9. The chain is 1-(5-phosphoribosyl)-5-[(5-phosphoribosylamino)methylideneamino] imidazole-4-carboxamide isomerase from Pseudomonas putida (strain ATCC 47054 / DSM 6125 / CFBP 8728 / NCIMB 11950 / KT2440).